A 32-amino-acid polypeptide reads, in one-letter code: Periplasmic [NiFeSe] hydrogenase small subunit (32 aa).

Residues C18 and C21 each contribute to the [4Fe-4S] cluster site.

It belongs to the [NiFe]/[NiFeSe] hydrogenase small subunit family. As to quaternary structure, heterodimer of a large and a small subunit. It depends on [3Fe-4S] cluster as a cofactor. [4Fe-4S] cluster is required as a cofactor.

The protein localises to the periplasm. It catalyses the reaction H2 + A = AH2. The protein is Periplasmic [NiFeSe] hydrogenase small subunit of Desulfomicrobium norvegicum (strain DSM 1741 / NCIMB 8310) (Desulfovibrio baculatus (strain Norway 4)).